We begin with the raw amino-acid sequence, 179 residues long: Probable galaptin lec-7 (179 aa).

In terms of domain architecture, Galectin spans 11–138 (SVYQIEENLK…SVDIESIVFK (128 aa)).

The chain is Probable galaptin lec-7 (lec-7) from Caenorhabditis elegans.